The following is a 615-amino-acid chain: Proteasome-associated ATPase (615 aa).

Residues 1-36 (MSESERPEAGDGTDALGASPDTPLSSEDAAELEQLR) form a disordered region. Residues 25-102 (SSEDAAELEQ…LREEVDRLGQ (78 aa)) are a coiled coil. Position 302-307 (302-307 (GCGKTL)) interacts with ATP. Residues 614 to 615 (YL) form a docks into pockets in the proteasome alpha-ring region.

Belongs to the AAA ATPase family. In terms of assembly, homohexamer. Assembles into a hexameric ring structure that caps the 20S proteasome core. Strongly interacts with the prokaryotic ubiquitin-like protein Pup through a hydrophobic interface; the interacting region of ARC lies in its N-terminal coiled-coil domain. There is one Pup binding site per ARC hexamer ring. Upon ATP-binding, the C-terminus of ARC interacts with the alpha-rings of the proteasome core, possibly by binding to the intersubunit pockets.

The protein operates within protein degradation; proteasomal Pup-dependent pathway. Its function is as follows. ATPase which is responsible for recognizing, binding, unfolding and translocation of pupylated proteins into the bacterial 20S proteasome core particle. May be essential for opening the gate of the 20S proteasome via an interaction with its C-terminus, thereby allowing substrate entry and access to the site of proteolysis. Thus, the C-termini of the proteasomal ATPase may function like a 'key in a lock' to induce gate opening and therefore regulate proteolysis. This Mycolicibacterium gilvum (strain PYR-GCK) (Mycobacterium gilvum (strain PYR-GCK)) protein is Proteasome-associated ATPase.